Reading from the N-terminus, the 336-residue chain is Alpha-glucoside transport system permease protein AglF (336 aa).

Transmembrane regions (helical) follow at residues 4–24 (LIAA…YFWS), 55–75 (PWLF…YPVV), 113–133 (FLWL…IAAL), 146–166 (LIFM…KFIY), 176–196 (IGLL…WITL), 202–222 (FFLM…ILSA), 258–278 (IAVV…IVLA), and 304–324 (FGRG…IMIW). Residues 109 to 325 (IFNNFLWLLV…ILVVPIMIWN (217 aa)) form the ABC transmembrane type-1 domain.

This sequence belongs to the binding-protein-dependent transport system permease family. MalFG subfamily.

The protein resides in the cell inner membrane. Functionally, part of the binding-protein-dependent transport system for alpha-glucosides such as sucrose, maltose and trehalose. Probably responsible for the translocation of the substrate across the membrane. The sequence is that of Alpha-glucoside transport system permease protein AglF (aglF) from Rhizobium meliloti (strain 1021) (Ensifer meliloti).